The chain runs to 339 residues: MRAYLRPLSFLYDQVVGVKNNLYDRGVFGVFKAPVPVVSIGNLTVGGTGKTPITDFCLKSLVADGKKVAVISRSYRADASAPCLVDVDHPFAARYFGDEPVLLAQANPQVSVYVGPSKWRTARYAVEKHKYDLLIVDDGFQHRRLHRDLNIVILDATESLSNYEVLPEGRARESWAGIERADVLILSKCNLAPEDELKALEARLPKNKEVLYFGYEIQQCQNVKTGQVLHRDELKGKKLFLVSAIARPDVFEKMMREIGEVSNQSLHFRDHHQYTADDVKNIENAFKKSQADYLVTTGKDAVKLRQLFNDTAILWSTSLEVAESGRKGRLHEIITQVLR.

44–51 (TVGGTGKT) provides a ligand contact to ATP.

It belongs to the LpxK family.

It catalyses the reaction a lipid A disaccharide + ATP = a lipid IVA + ADP + H(+). It participates in glycolipid biosynthesis; lipid IV(A) biosynthesis; lipid IV(A) from (3R)-3-hydroxytetradecanoyl-[acyl-carrier-protein] and UDP-N-acetyl-alpha-D-glucosamine: step 6/6. Transfers the gamma-phosphate of ATP to the 4'-position of a tetraacyldisaccharide 1-phosphate intermediate (termed DS-1-P) to form tetraacyldisaccharide 1,4'-bis-phosphate (lipid IVA). The sequence is that of Tetraacyldisaccharide 4'-kinase from Bdellovibrio bacteriovorus (strain ATCC 15356 / DSM 50701 / NCIMB 9529 / HD100).